The chain runs to 449 residues: Glutamyl-tRNA reductase (449 aa).

Substrate-binding positions include 58-61 (TCNR), Ser-121, 126-128 (ETQ), and Gln-132. Catalysis depends on Cys-59, which acts as the Nucleophile. 203-208 (GLGEMA) serves as a coordination point for NADP(+).

The protein belongs to the glutamyl-tRNA reductase family. In terms of assembly, homodimer.

It catalyses the reaction (S)-4-amino-5-oxopentanoate + tRNA(Glu) + NADP(+) = L-glutamyl-tRNA(Glu) + NADPH + H(+). Its pathway is porphyrin-containing compound metabolism; protoporphyrin-IX biosynthesis; 5-aminolevulinate from L-glutamyl-tRNA(Glu): step 1/2. Catalyzes the NADPH-dependent reduction of glutamyl-tRNA(Glu) to glutamate 1-semialdehyde (GSA). The sequence is that of Glutamyl-tRNA reductase from Helicobacter pylori (strain Shi470).